A 56-amino-acid chain; its full sequence is MAYKILDTCVSCGACAAECPVDAISQGDTQFVIDADTCIDCGNCANVCPVGAPVQE.

4Fe-4S ferredoxin-type domains are found at residues 2 to 28 (AYKI…SQGD) and 29 to 56 (TQFV…PVQE). [4Fe-4S] cluster contacts are provided by C9, C12, C15, C19, C38, C41, C44, and C48.

It depends on [4Fe-4S] cluster as a cofactor.

Functionally, ferredoxins are iron-sulfur proteins that transfer electrons in a wide variety of metabolic reactions. The chain is Ferredoxin (fer) from Clostridium perfringens (strain 13 / Type A).